The following is a 541-amino-acid chain: Synaptotagmin-1 (541 aa).

Residues Met-1–Cys-11 are Extracellular-facing. Residues Gly-12–Leu-32 form a helical membrane-spanning segment. The Cytoplasmic segment spans residues Pro-33 to Ser-541. Residues Asp-67 to Leu-249 form the SMP-LTD domain. The tract at residues Gln-227–Val-509 is phospholipid binding. 2 C2 domains span residues Trp-240–Leu-362 and Gly-401–Phe-521. Asp-276, Asp-282, Asp-332, and Glu-334 together coordinate Ca(2+).

The protein belongs to the synaptotagmin family. Interacts with cabbage leaf curl virus (CaLCuV) BC1 protein and tobacco mosaic virus (TMV) MP protein. Interacts with ROSY1. Ca(2+) serves as cofactor. Expressed in roots, shoots, rosette and cauline leaves, inflorescences, and siliques. In roots, expressed in vascular bundle, epidermis, the differential zone of the tips of root hairs, and the quiescent center and columella of root tips.

The protein localises to the cell membrane. Its subcellular location is the endosome membrane. Plays an important role in maintaining plasma membrane integrity during freezing and osmotic stresses. May function in membrane resealing during calcium-dependent freezing tolerance. May regulate endocytosis and endosome recycling at the plasma membrane and cell-to-cell trafficking of cabbage leaf curl virus (CaLCuV) and tobacco mosaic virus (TMV) movement proteins via plasmodesmata. The protein is Synaptotagmin-1 (SYT1) of Arabidopsis thaliana (Mouse-ear cress).